The sequence spans 140 residues: Truncated tyrosine phosphatase D1 (140 aa).

Residues 1–140 (MRRPNCIAEI…SAQWIQFLKK (140 aa)) enclose the Tyrosine-protein phosphatase domain.

This sequence belongs to the protein-tyrosine phosphatase family.

This is Truncated tyrosine phosphatase D1 (D1) from Microplitis demolitor bracovirus (isolate Webb) (MdBV).